A 171-amino-acid polypeptide reads, in one-letter code: Small ribosomal subunit protein uS13 (171 aa).

The disordered stretch occupies residues 128 to 171; it reads HERGQKVRGQRTKSTGRTEGTIGVNVEAIKEEQAEDDAADGGEE. Positions 160–171 are enriched in acidic residues; it reads QAEDDAADGGEE.

Belongs to the universal ribosomal protein uS13 family. As to quaternary structure, part of the 30S ribosomal subunit. Forms a loose heterodimer with protein S19. Forms two bridges to the 50S subunit in the 70S ribosome.

In terms of biological role, located at the top of the head of the 30S subunit, it contacts several helices of the 16S rRNA. In the 70S ribosome it contacts the 23S rRNA (bridge B1a) and protein L5 of the 50S subunit (bridge B1b), connecting the 2 subunits; these bridges are implicated in subunit movement. This is Small ribosomal subunit protein uS13 from Halobacterium salinarum (strain ATCC 700922 / JCM 11081 / NRC-1) (Halobacterium halobium).